The primary structure comprises 264 residues: Thymidylate synthase (264 aa).

R21 provides a ligand contact to dUMP. H51 is a (6R)-5,10-methylene-5,6,7,8-tetrahydrofolate binding site. 126–127 (RR) contacts dUMP. C146 acts as the Nucleophile in catalysis. DUMP contacts are provided by residues 166-169 (RSCD), N177, and 207-209 (HLY). A (6R)-5,10-methylene-5,6,7,8-tetrahydrofolate-binding site is contributed by D169. A263 is a binding site for (6R)-5,10-methylene-5,6,7,8-tetrahydrofolate.

The protein belongs to the thymidylate synthase family. Bacterial-type ThyA subfamily. As to quaternary structure, homodimer.

Its subcellular location is the cytoplasm. The enzyme catalyses dUMP + (6R)-5,10-methylene-5,6,7,8-tetrahydrofolate = 7,8-dihydrofolate + dTMP. It participates in pyrimidine metabolism; dTTP biosynthesis. Functionally, catalyzes the reductive methylation of 2'-deoxyuridine-5'-monophosphate (dUMP) to 2'-deoxythymidine-5'-monophosphate (dTMP) while utilizing 5,10-methylenetetrahydrofolate (mTHF) as the methyl donor and reductant in the reaction, yielding dihydrofolate (DHF) as a by-product. This enzymatic reaction provides an intracellular de novo source of dTMP, an essential precursor for DNA biosynthesis. The polypeptide is Thymidylate synthase (Salmonella typhimurium (strain LT2 / SGSC1412 / ATCC 700720)).